The following is a 594-amino-acid chain: Fidgetin-like protein 1 (594 aa).

2 disordered regions span residues 1-79 and 239-261; these read MYSP…DDEL and QSIG…KRCS. Polar residues predominate over residues 56-73; sequence PSDSAQQQPPFKSRSQQN. Residues Ala-319 and 359–364 contribute to the ATP site; that span reads GTGKTM.

It belongs to the AAA ATPase family. As to quaternary structure, hexamer. Mg(2+) is required as a cofactor. Expressed in germ cells.

The protein localises to the nucleus. The enzyme catalyses ATP + H2O = ADP + phosphate + H(+). In terms of biological role, has a role in spindle assembly which acts in the progression through mitosis during embryogenesis. Required for fertility. The protein is Fidgetin-like protein 1 (figl-1) of Caenorhabditis elegans.